The chain runs to 249 residues: Vitamin B12 import ATP-binding protein BtuD (249 aa).

Residues 5–233 enclose the ABC transporter domain; the sequence is MQLQDVAETT…PNLAQAYGMN (229 aa). 33 to 40 is an ATP binding site; sequence GPNGAGKS.

Belongs to the ABC transporter superfamily. Vitamin B12 importer (TC 3.A.1.13.1) family. In terms of assembly, the complex is composed of two ATP-binding proteins (BtuD), two transmembrane proteins (BtuC) and a solute-binding protein (BtuF).

It is found in the cell inner membrane. The enzyme catalyses an R-cob(III)alamin(out) + ATP + H2O = an R-cob(III)alamin(in) + ADP + phosphate + H(+). Its function is as follows. Part of the ABC transporter complex BtuCDF involved in vitamin B12 import. Responsible for energy coupling to the transport system. The chain is Vitamin B12 import ATP-binding protein BtuD from Citrobacter koseri (strain ATCC BAA-895 / CDC 4225-83 / SGSC4696).